The chain runs to 260 residues: ATP synthase subunit a (260 aa).

Residues 1–11 constitute a propeptide, removed in mature form; the sequence is MQNTLLRTYIN. 6 consecutive transmembrane segments (helical) span residues 37–57, 96–116, 126–146, 152–172, 192–212, and 217–237; these read ITTFTLYTIIVLLVVSSLYVL, YFPFIYTLFMFILISNLISMI, FVFIISLSMIIWLGITILSLF, FFSLFVPSGTALPLVPLLVVI, IFSGHLLMAILAGLTMTFVQI, and LILGFIPLAIILIIMCLEFGI.

This sequence belongs to the ATPase A chain family. As to quaternary structure, F-type ATPases have 2 components, CF(1) - the catalytic core - and CF(0) - the membrane proton channel. CF(1) has five subunits: alpha(3), beta(3), gamma(1), delta(1), epsilon(1). CF(0) has three main subunits: a, b and c.

The protein resides in the mitochondrion inner membrane. Mitochondrial membrane ATP synthase (F(1)F(0) ATP synthase or Complex V) produces ATP from ADP in the presence of a proton gradient across the membrane which is generated by electron transport complexes of the respiratory chain. F-type ATPases consist of two structural domains, F(1) - containing the extramembraneous catalytic core and F(0) - containing the membrane proton channel, linked together by a central stalk and a peripheral stalk. During catalysis, ATP synthesis in the catalytic domain of F(1) is coupled via a rotary mechanism of the central stalk subunits to proton translocation. Key component of the proton channel; it may play a direct role in the translocation of protons across the membrane. The chain is ATP synthase subunit a (ATP6) from Candida glabrata (strain ATCC 2001 / BCRC 20586 / JCM 3761 / NBRC 0622 / NRRL Y-65 / CBS 138) (Yeast).